A 420-amino-acid polypeptide reads, in one-letter code: Glutamyl-tRNA reductase (420 aa).

Substrate-binding positions include 49–52 (TCNR), S109, 114–116 (EPQ), and Q120. The active-site Nucleophile is the C50. 189 to 194 (GAGETI) contributes to the NADP(+) binding site.

Belongs to the glutamyl-tRNA reductase family. Homodimer.

The enzyme catalyses (S)-4-amino-5-oxopentanoate + tRNA(Glu) + NADP(+) = L-glutamyl-tRNA(Glu) + NADPH + H(+). Its pathway is porphyrin-containing compound metabolism; protoporphyrin-IX biosynthesis; 5-aminolevulinate from L-glutamyl-tRNA(Glu): step 1/2. In terms of biological role, catalyzes the NADPH-dependent reduction of glutamyl-tRNA(Glu) to glutamate 1-semialdehyde (GSA). The protein is Glutamyl-tRNA reductase of Sodalis glossinidius (strain morsitans).